The sequence spans 179 residues: Sec-independent protein translocase protein TatB (179 aa).

The helical transmembrane segment at F2 to G22 threads the bilayer. The span at L98–L109 shows a compositional bias: low complexity. The segment at L98 to T179 is disordered.

The protein belongs to the TatB family. The Tat system comprises two distinct complexes: a TatABC complex, containing multiple copies of TatA, TatB and TatC subunits, and a separate TatA complex, containing only TatA subunits. Substrates initially bind to the TatABC complex, which probably triggers association of the separate TatA complex to form the active translocon.

The protein localises to the cell membrane. Functionally, part of the twin-arginine translocation (Tat) system that transports large folded proteins containing a characteristic twin-arginine motif in their signal peptide across membranes. Together with TatC, TatB is part of a receptor directly interacting with Tat signal peptides. TatB may form an oligomeric binding site that transiently accommodates folded Tat precursor proteins before their translocation. The chain is Sec-independent protein translocase protein TatB from Frankia casuarinae (strain DSM 45818 / CECT 9043 / HFP020203 / CcI3).